The chain runs to 145 residues: Basic phospholipase A2 PC10 (145 aa).

Positions 1 to 21 are cleaved as a signal peptide; sequence MYPAHLLLLLAVCVSLLGASA. The propeptide occupies 22–27; that stretch reads IPPLPL. 7 disulfide bridges follow: cysteine 38–cysteine 98, cysteine 54–cysteine 144, cysteine 56–cysteine 72, cysteine 71–cysteine 125, cysteine 78–cysteine 118, cysteine 87–cysteine 111, and cysteine 105–cysteine 116. Ca(2+) is bound by residues tyrosine 55, glycine 57, and glycine 59. Residue histidine 75 is part of the active site. Aspartate 76 contacts Ca(2+). Aspartate 119 is an active-site residue.

This sequence belongs to the phospholipase A2 family. Group I subfamily. D49 sub-subfamily. Requires Ca(2+) as cofactor.

The protein resides in the secreted. The catalysed reaction is a 1,2-diacyl-sn-glycero-3-phosphocholine + H2O = a 1-acyl-sn-glycero-3-phosphocholine + a fatty acid + H(+). Its function is as follows. PLA2 catalyzes the calcium-dependent hydrolysis of the 2-acyl groups in 3-sn-phosphoglycerides. This is Basic phospholipase A2 PC10 from Laticauda laticaudata (Blue-ringed sea krait).